Reading from the N-terminus, the 330-residue chain is Ferric enterobactin transport system permease protein FepG (330 aa).

At 1-7 the chain is on the periplasmic side; the sequence is MIYVSRR. The helical transmembrane segment at 8-28 threads the bilayer; that stretch reads LLITCLLLVSACVVAGIWGLR. At 29 to 62 the chain is on the cytoplasmic side; the sequence is SGAVTLETSQVFAALMGDAPRSMTMVVTEWRLPR. Residues 63–83 traverse the membrane as a helical segment; sequence VLMALLIGAALGVSGAIFQSL. The Periplasmic segment spans residues 84 to 92; it reads MRNPLGSPD. Residues 93–113 form a helical membrane-spanning segment; the sequence is VMGFNTGAWSGVLVAMVLFGQ. At 114 to 117 the chain is on the cytoplasmic side; sequence DLTA. A helical transmembrane segment spans residues 118–138; the sequence is IALSAMVGGIVTSLLVWLLAW. The Periplasmic segment spans residues 139–146; it reads RNGIDTFR. A helical transmembrane segment spans residues 147-167; sequence LIIIGIGVRAMLVAFNTWLLL. At 168 to 190 the chain is on the cytoplasmic side; it reads KASLETALTAGLWNAGSLNGLTW. The chain crosses the membrane as a helical span at residues 191 to 211; that stretch reads AKTSPSAPIIILMLIAAALLV. Topologically, residues 212–235 are periplasmic; sequence RRMRLLEMGDDTACALGVSVERSR. The helical transmembrane segment at 236-256 threads the bilayer; the sequence is LLMMLVAVVLTAAATALAGPI. The Cytoplasmic portion of the chain corresponds to 257–275; the sequence is SFIALVAPHIARRISGTAR. A helical membrane pass occupies residues 276–296; the sequence is WGLTQAALCGALLLLAADLCA. Residues 297–303 are Periplasmic-facing; it reads QQLFMPY. A helical transmembrane segment spans residues 304-324; the sequence is QLPVGVVTVSLGGIYLIVLLI. The Cytoplasmic portion of the chain corresponds to 325–330; it reads QESRKK.

Belongs to the binding-protein-dependent transport system permease family. FecCD subfamily. In terms of assembly, the complex is composed of two ATP-binding proteins (FepC), two transmembrane proteins (FepD and FepG) and a solute-binding protein (FepB).

The protein localises to the cell inner membrane. Part of the ABC transporter complex FepBDGC involved in ferric enterobactin uptake. Responsible for the translocation of the substrate across the membrane. The protein is Ferric enterobactin transport system permease protein FepG (fepG) of Escherichia coli (strain K12).